The following is a 199-amino-acid chain: Protein GrpE (199 aa).

The segment covering 1–24 (MSKQNKKDWKKFKDEHKEEHKVEN) has biased composition (basic and acidic residues). The interval 1–52 (MSKQNKKDWKKFKDEHKEEHKVENEILEEETDEESQHQEPALGHPSYTALEE) is disordered.

This sequence belongs to the GrpE family. In terms of assembly, homodimer.

The protein resides in the cytoplasm. Participates actively in the response to hyperosmotic and heat shock by preventing the aggregation of stress-denatured proteins, in association with DnaK and GrpE. It is the nucleotide exchange factor for DnaK and may function as a thermosensor. Unfolded proteins bind initially to DnaJ; upon interaction with the DnaJ-bound protein, DnaK hydrolyzes its bound ATP, resulting in the formation of a stable complex. GrpE releases ADP from DnaK; ATP binding to DnaK triggers the release of the substrate protein, thus completing the reaction cycle. Several rounds of ATP-dependent interactions between DnaJ, DnaK and GrpE are required for fully efficient folding. This chain is Protein GrpE, found in Legionella pneumophila.